A 551-amino-acid polypeptide reads, in one-letter code: Arylsulfatase (551 aa).

Positions 1–20 (MKSAPFLFLLGLLGLVTAQT) are cleaved as a signal peptide. Glutamine 21 is subject to Blocked amino end (Gln). Positions 60, 61, and 100 each coordinate Ca(2+). The active-site Nucleophile is cysteine 100. Cysteine 100 is modified (3-oxoalanine (Cys)). Residue histidine 158 is part of the active site. N-linked (GlcNAc...) asparagine glycosylation is found at asparagine 164, asparagine 213, and asparagine 296. Ca(2+) contacts are provided by aspartate 308 and histidine 309.

It belongs to the sulfatase family. The cofactor is Ca(2+). In terms of processing, the conversion to 3-oxoalanine (also known as C-formylglycine, FGly), of a serine or cysteine residue in prokaryotes and of a cysteine residue in eukaryotes, is critical for catalytic activity.

Its subcellular location is the cytoplasm. It is found in the secreted. The protein localises to the extracellular space. It localises to the extracellular matrix. It carries out the reaction an aryl sulfate + H2O = a phenol + sulfate + H(+). Its function is as follows. May be a structural component of the extracellular matrices involved in cell movement during morphogenesis. The sequence is that of Arylsulfatase from Hemicentrotus pulcherrimus (Sea urchin).